The chain runs to 1150 residues: Fl(2)d-associated complex component (1150 aa).

Residues 1–10 are compositionally biased toward basic and acidic residues; it reads MEKKAKESLR. Disordered regions lie at residues 1–444, 477–710, 833–914, and 1034–1053; these read MEKK…EEER, QGRE…PPPL, ASED…MDTN, and KEQG…AKIP. Over residues 11–20 the composition is skewed to basic residues; the sequence is RYKKAARHSA. Low complexity predominate over residues 21–44; the sequence is THSSSSDSTSDSDSGSSSYSSTDS. Residues 47 to 69 show a composition bias toward gly residues; the sequence is GVGGVGVGVGVPGGAGGPGGSGS. A compositionally biased stretch (basic residues) spans 72–97; the sequence is GHPHTHGHGHHPRSAERHHRKKKSSR. The segment covering 98–107 has biased composition (low complexity); the sequence is RGGSSSGDEP. 2 stretches are compositionally biased toward basic residues: residues 110-144 and 162-175; these read SRRK…KKRA and AKLK…RLRA. The stretch at 122-147 forms a coiled coil; the sequence is KKLVAKRNHIKRKLKEARLKKRAAAA. Residues 176 to 199 show a composition bias toward basic and acidic residues; the sequence is ASKEQRERDKLRVVQRDRERDHHR. The segment covering 202–215 has biased composition (low complexity); the sequence is SSRSPPSSSTTTTT. Residues 269 to 347 are a coiled coil; sequence PSLERERERE…KLRRQEEEEG (79 aa). Basic and acidic residues-rich tracts occupy residues 270–414, 428–444, and 492–529; these read SLER…DEMR, YAPR…EEER, and PDER…PEWE. Residues 537–558 are compositionally biased toward gly residues; that stretch reads AGGGPGGPSGTPGRPGGFVGGP. 2 stretches are compositionally biased toward basic and acidic residues: residues 589-611 and 630-640; these read ERER…DRPD and WLEHDQREKPR. Positions 660–669 are enriched in pro residues; that stretch reads PPAPSHPHPA. Positions 693–702 are enriched in basic and acidic residues; it reads GHGDHGERPG. A compositionally biased stretch (low complexity) spans 851-861; the sequence is QSLNLNQSLSS. Residues 879–889 show a composition bias toward acidic residues; that stretch reads ELSEISDSDDD. The span at 890–903 shows a compositional bias: basic and acidic residues; sequence ILNKTDKVRPKNEL. The span at 905-914 shows a compositional bias: acidic residues; it reads TETEQEMDTN.

Belongs to the ZC3H13 family. Component of the WMM complex, a N6-methyltransferase complex composed of a catalytic subcomplex, named MAC, and of an associated subcomplex, named MACOM. The MAC subcomplex is composed of Ime4/Mettl3 and Mettl14. The MACOM subcomplex is composed of fl(2)d, Flacc/Xio, Hakai, vir, and, in some cases of nito. Widely expressed during embryogenesis but shows enrichment in the neuroectoderm.

It localises to the nucleus. Its function is as follows. Associated component of the WMM complex, a complex that mediates N6-methyladenosine (m6A) methylation of mRNAs, a modification that plays a role in the efficiency of mRNA splicing and is required for sex determination. In the WMM complex, acts as a key regulator of m6A methylation by bridging fl(2)d to the RNA-binding component nito. Required for sex determination and dosage compensation via Sxl alternative splicing: m6A methylation acts as a key regulator of Sxl pre-mRNA and promotes female-specific alternative splicing of Sxl, which determines female physiognomy. This is Fl(2)d-associated complex component from Drosophila melanogaster (Fruit fly).